Reading from the N-terminus, the 59-residue chain is UPF0434 protein LHK_01103 (59 aa).

The protein belongs to the UPF0434 family.

The protein is UPF0434 protein LHK_01103 of Laribacter hongkongensis (strain HLHK9).